The chain runs to 478 residues: Divinyl ether synthase CYP74D2 (478 aa).

Residue cysteine 431 participates in heme binding.

This sequence belongs to the cytochrome P450 family. 9-divinyl ether synthase subfamily. Expressed in roots.

It carries out the reaction (9S)-hydroperoxy-(10E,12Z)-octadecadienoate = colneleate + H2O. It catalyses the reaction (9S)-hydroperoxy-(10E,12Z,15Z)-octadecatrienoate = colnelenate + H2O. In terms of biological role, involved in the biosynthesis of the anti-fungal and antibacterial toxins colneleate and colnelenate. Can use (9S)-hydroperoxy-(10E,12Z)-octadecadienoate (9-HPOD) and (9S)-hydroperoxy-(10E,12Z,15Z)-octadecatrienoate (9-HPOT) as substrates but has no activity with the corresponding 13-hydroperoxides (13-HPOD and 13-HPOT). The protein is Divinyl ether synthase CYP74D2 of Solanum tuberosum (Potato).